The sequence spans 229 residues: Putative N-acetylmannosamine-6-phosphate 2-epimerase (229 aa).

The protein belongs to the NanE family.

The catalysed reaction is an N-acyl-D-glucosamine 6-phosphate = an N-acyl-D-mannosamine 6-phosphate. It functions in the pathway amino-sugar metabolism; N-acetylneuraminate degradation; D-fructose 6-phosphate from N-acetylneuraminate: step 3/5. In terms of biological role, converts N-acetylmannosamine-6-phosphate (ManNAc-6-P) to N-acetylglucosamine-6-phosphate (GlcNAc-6-P). In Shigella flexneri serotype 5b (strain 8401), this protein is Putative N-acetylmannosamine-6-phosphate 2-epimerase.